The following is a 99-amino-acid chain: DASH complex subunit DAD1 (99 aa).

A disordered region spans residues 69–99; that stretch reads GMNHQTRENTRDENNKISSSDTEDENNNNKI. The span at 73 to 83 shows a compositional bias: basic and acidic residues; that stretch reads QTRENTRDENN. The span at 89–99 shows a compositional bias: acidic residues; it reads DTEDENNNNKI.

Belongs to the DASH complex DAD1 family. As to quaternary structure, component of the DASH complex consisting of ASK1, DAD1, DAD2, DAD3, DAD4, DAM1, DUO1, HSK3, SPC19 and SPC34, with a stoichiometry of one copy of each subunit per complex. Multiple DASH complexes oligomerize to form a ring that encircles spindle microtubules and organizes the rod-like NDC80 complexes of the outer kinetochore. DASH complex oligomerization strengthens microtubule attachments. On cytoplasmic microtubules, DASH complexes appear to form patches instead of rings.

It is found in the chromosome. The protein resides in the centromere. It localises to the kinetochore. The protein localises to the cytoplasm. Its subcellular location is the cytoskeleton. It is found in the spindle. The protein resides in the nucleus. In terms of biological role, component of the DASH complex that connects microtubules with kinetochores and couples microtubule depolymerisation to chromosome movement; it is involved in retrieving kinetochores to the spindle poles before their re-orientation on the spindle in early mitosis and allows microtubule depolymerization to pull chromosomes apart and resist detachment during anaphase. Kinetochores, consisting of a centromere-associated inner segment and a microtubule-contacting outer segment, play a crucial role in chromosome segregation by mediating the physical connection between centromeric DNA and microtubules. Kinetochores also serve as an input point for the spindle assembly checkpoint, which delays anaphase until all chromosomes have bioriented on the mitotic spindle. The sequence is that of DASH complex subunit DAD1 from Candida albicans (strain SC5314 / ATCC MYA-2876) (Yeast).